Reading from the N-terminus, the 344-residue chain is Ribosomal RNA large subunit methyltransferase Cfr (344 aa).

Glutamate 90 serves as the catalytic Proton acceptor. One can recognise a Radical SAM core domain in the interval 97–330 (KQGWESFCIS…ATVRTQFGSE (234 aa)). Residues cysteine 104 and cysteine 335 are joined by a disulfide bond. Residues cysteine 111, cysteine 115, and cysteine 118 each coordinate [4Fe-4S] cluster. S-adenosyl-L-methionine is bound by residues 157-158 (GE), serine 188, 211-213 (SLH), and asparagine 292. The active-site S-methylcysteine intermediate is the cysteine 335.

This sequence belongs to the radical SAM superfamily. RlmN family. Cfr subfamily. Requires [4Fe-4S] cluster as cofactor.

The protein resides in the cytoplasm. The enzyme catalyses adenosine(2503) in 23S rRNA + 2 reduced [2Fe-2S]-[ferredoxin] + 2 S-adenosyl-L-methionine = 8-methyladenosine(2503) in 23S rRNA + 5'-deoxyadenosine + L-methionine + 2 oxidized [2Fe-2S]-[ferredoxin] + S-adenosyl-L-homocysteine. Its function is as follows. Specifically methylates position 8 of adenine 2503 in 23S rRNA. Confers resistance to some classes of antibiotics. The polypeptide is Ribosomal RNA large subunit methyltransferase Cfr (Clostridium botulinum (strain Hall / ATCC 3502 / NCTC 13319 / Type A)).